A 233-amino-acid chain; its full sequence is Large ribosomal subunit protein uL1 (233 aa).

This sequence belongs to the universal ribosomal protein uL1 family. As to quaternary structure, part of the 50S ribosomal subunit.

Binds directly to 23S rRNA. The L1 stalk is quite mobile in the ribosome, and is involved in E site tRNA release. In terms of biological role, protein L1 is also a translational repressor protein, it controls the translation of the L11 operon by binding to its mRNA. The sequence is that of Large ribosomal subunit protein uL1 from Hamiltonella defensa subsp. Acyrthosiphon pisum (strain 5AT).